Reading from the N-terminus, the 610-residue chain is UvrABC system protein C (610 aa).

The GIY-YIG domain maps to 16-94 (SQPGVYRMYD…IKLYQPRYNV (79 aa)). Positions 204 to 239 (QQVLTQLISRMEEASRLLHFEDAARIRDQIQAVRRV) constitute a UVR domain.

The protein belongs to the UvrC family. As to quaternary structure, interacts with UvrB in an incision complex.

The protein localises to the cytoplasm. In terms of biological role, the UvrABC repair system catalyzes the recognition and processing of DNA lesions. UvrC both incises the 5' and 3' sides of the lesion. The N-terminal half is responsible for the 3' incision and the C-terminal half is responsible for the 5' incision. In Yersinia enterocolitica serotype O:8 / biotype 1B (strain NCTC 13174 / 8081), this protein is UvrABC system protein C.